Here is a 252-residue protein sequence, read N- to C-terminus: Zinc finger CCCH domain-containing protein 28 (252 aa).

Basic and acidic residues predominate over residues 1–21; sequence MSHRRDYGSDAVHVRITHDPP. The interval 1–31 is disordered; sequence MSHRRDYGSDAVHVRITHDPPPENCFPNSGD. 2 consecutive C3H1-type zinc fingers follow at residues 71–99 and 143–171; these read FFKTKLCFKFRAGTCPYSASSCHFAHSAE and NWKTRICNKWQTTGYCPFGSHCHFAHGPS.

The protein is Zinc finger CCCH domain-containing protein 28 of Arabidopsis thaliana (Mouse-ear cress).